Consider the following 258-residue polypeptide: UPF0246 protein Bpro_3713 (258 aa).

The protein belongs to the UPF0246 family.

The sequence is that of UPF0246 protein Bpro_3713 from Polaromonas sp. (strain JS666 / ATCC BAA-500).